The sequence spans 236 residues: Thymidylate kinase (236 aa).

Position 9-16 (9-16) interacts with ATP; sequence GPEGSGKS.

Belongs to the thymidylate kinase family.

It carries out the reaction dTMP + ATP = dTDP + ADP. Phosphorylation of dTMP to form dTDP in both de novo and salvage pathways of dTTP synthesis. The sequence is that of Thymidylate kinase from Herpetosiphon aurantiacus (strain ATCC 23779 / DSM 785 / 114-95).